Here is a 106-residue protein sequence, read N- to C-terminus: Cytochrome c oxidase assembly factor 3 homolog, mitochondrial (106 aa).

Positions 1–34 (MASSGAGDPLDSKRGEAPFAQRIDPTREKLTPEQ) are disordered. A2 is subject to N-acetylalanine. Topologically, residues 2-57 (ASSGAGDPLDSKRGEAPFAQRIDPTREKLTPEQLHSMRQAELAQWQKVLPRRRTRN) are mitochondrial matrix. Residues 58-78 (IVTGLGIGALVLAIYGYTFYS) form a helical membrane-spanning segment. Residues 78–104 (SISQERFLDELEDEAKAARARALARAS) are a coiled coil. Residues 79–106 (ISQERFLDELEDEAKAARARALARASGS) lie on the Mitochondrial intermembrane side of the membrane.

This sequence belongs to the COA3 family. As to quaternary structure, along with COX14, core component of the MITRAC (mitochondrial translation regulation assembly intermediate of cytochrome c oxidase complex) complex. Interacts with MT-CO1/COX1, SMIM20, SURF1 and TIMM21.

Its subcellular location is the mitochondrion inner membrane. Functionally, core component of the MITRAC (mitochondrial translation regulation assembly intermediate of cytochrome c oxidase complex) complex, that regulates cytochrome c oxidase assembly. MITRAC complexes regulate both translation of mitochondrial encoded components and assembly of nuclear-encoded components imported in mitochondrion. Required for efficient translation of MT-CO1 and mitochondrial respiratory chain complex IV assembly. This chain is Cytochrome c oxidase assembly factor 3 homolog, mitochondrial (COA3), found in Homo sapiens (Human).